Reading from the N-terminus, the 570-residue chain is Urease subunit alpha 1 (570 aa).

Residues 131-570 (GGIDTHVHFI…VPMAQRYFLF (440 aa)) enclose the Urease domain. Histidine 136, histidine 138, and lysine 219 together coordinate Ni(2+). Lysine 219 is modified (N6-carboxylysine). Residue histidine 221 coordinates substrate. Histidine 248 and histidine 274 together coordinate Ni(2+). The active-site Proton donor is the histidine 322. Ni(2+) is bound at residue aspartate 362.

It belongs to the metallo-dependent hydrolases superfamily. Urease alpha subunit family. As to quaternary structure, heterotrimer of UreA (gamma), UreB (beta) and UreC (alpha) subunits. Three heterotrimers associate to form the active enzyme. The cofactor is Ni cation. In terms of processing, carboxylation allows a single lysine to coordinate two nickel ions.

It localises to the cytoplasm. It carries out the reaction urea + 2 H2O + H(+) = hydrogencarbonate + 2 NH4(+). The protein operates within nitrogen metabolism; urea degradation; CO(2) and NH(3) from urea (urease route): step 1/1. In terms of biological role, may protect brucellae during their passage through the stomach. The major route of infection in human brucellosis is oral. The protein is Urease subunit alpha 1 of Brucella abortus (strain 2308).